A 967-amino-acid polypeptide reads, in one-letter code: MSEGTIRINKVLREFNISLERAVDYLKDKGHVIESNPNTKISDEVYNVLSNQFAGDKGNKDASKEVGEEKRKEKEALRVERENEIEEKRKVDEERQRQEVIRAKAVVTGLKQVGTIDLSAKSVIKPTIIPGVKAEAKAEVKTEAKVEAKTEVKVEVKVEPKAEMPVAKTPEKSEQPKQHVAKETLVKEKIFAKEPAKNVAKPIVGKTPEATSKPSVEDAPVDETHETKYTKLTGPTFSGQTIDLSQFNKPKKIIEPNKGGAKPAGAGNNNNNKNKRKRIPTKSGEANATPRVPGTNLIRPNTGGNATGGGFNRANKPGFVKGARPAIVPKVEPTEEDVKNQIKETLERLQGKGNKSKAAKYRRDKRDTHRQKSDDEQRELEAGSKTIKVTEFVTVGEVATMMDVPITKVIGTCMSLGIMVTMNQRLDAETLTIVCDEFGFEVEFITTDLEENIEVVEDSAEDLVHRAPIVTVMGHVDHGKTSLLDYIRKTNVIAGESGGITQHIGAYGVELENGQKIAFLDTPGHEAFTAMRARGAQVTDIAIIVVAADDDIMPQTKEAISHAQAANVPIIFAINKVDKQNANPEKIKEKLAAMNFLVEDWGGKYQSQDISAKTGIGMKELLEKVLLEAEVLDLKANPNKPATGTVVEAFLDKGRGYVSTVLVQAGTMRVGDYILAGKNHGKIKAMQDERGNNVTEAGPSTPISILGLAGAPTAGDKFNIFADEREAKAIAAKRTQLMREQSVRVQRHITLDEIGRRIALGQFKELNIILKGDVDGSVEALSDSFSKLSTPEIQINIIHKGVGAITETDVMLASASDAIIIGFNVRPAGNAKQLAEKEEIDIRHYSIIYAAIDDLRDAMEGMLSPEMKEEITGLAGVRELFKISKVGTIAGCMITDGKILRANKVRVIRDNVVIHTGDIIALKRFKDDVKEVAKGYDCGIQIKGFNEIEIDDIIEGFTEVAVKRKLK.

Disordered stretches follow at residues 201 to 320 (KPIV…PGFV) and 349 to 382 (LQGK…ELEA). Positions 233 to 248 (TGPTFSGQTIDLSQFN) are enriched in polar residues. The segment covering 256–272 (PNKGGAKPAGAGNNNNN) has biased composition (low complexity). Positions 354–363 (NKSKAAKYRR) are enriched in basic residues. The span at 364–382 (DKRDTHRQKSDDEQRELEA) shows a compositional bias: basic and acidic residues. The tr-type G domain maps to 465–635 (HRAPIVTVMG…LLEAEVLDLK (171 aa)). Positions 474 to 481 (GHVDHGKT) are G1. 474–481 (GHVDHGKT) is a GTP binding site. The interval 499 to 503 (GITQH) is G2. The tract at residues 521–524 (DTPG) is G3. GTP-binding positions include 521–525 (DTPGH) and 575–578 (NKVD). Residues 575 to 578 (NKVD) are G4. Positions 611 to 613 (SAK) are G5.

This sequence belongs to the TRAFAC class translation factor GTPase superfamily. Classic translation factor GTPase family. IF-2 subfamily.

The protein localises to the cytoplasm. In terms of biological role, one of the essential components for the initiation of protein synthesis. Protects formylmethionyl-tRNA from spontaneous hydrolysis and promotes its binding to the 30S ribosomal subunits. Also involved in the hydrolysis of GTP during the formation of the 70S ribosomal complex. This chain is Translation initiation factor IF-2, found in Flavobacterium psychrophilum (strain ATCC 49511 / DSM 21280 / CIP 103535 / JIP02/86).